Consider the following 2009-residue polypeptide: Sodium channel protein type 1 subunit alpha (2009 aa).

Over 1 to 128 (MEQTVLVPPG…KIAIKILVHS (128 aa)) the chain is Cytoplasmic. A compositionally biased stretch (basic and acidic residues) spans 28–48 (RIAEEKAKNPKPDKKDDDENG). Residues 28-60 (RIAEEKAKNPKPDKKDDDENGPKPNSDLEAGKN) form a disordered region. The stretch at 110–454 (ILTPFNPLRK…QQMLEQLKKQ (345 aa)) is one I repeat. A helical transmembrane segment spans residues 129–146 (LFSMLIMCTILTNCVFMT). At 147-152 (MSNPPD) the chain is on the extracellular side. The helical transmembrane segment at 153–177 (WTKNVEYTFTGIYTFESLIKIIARG) threads the bilayer. The Cytoplasmic segment spans residues 178-188 (FCLEDFTFLRD). A helical membrane pass occupies residues 189-205 (PWNWLDFTVITFAYVTE). Topologically, residues 206–213 (FVDLGNVS) are extracellular. A helical transmembrane segment spans residues 214 to 235 (ALRTFRVLRALKTISVIPGLKT). The Cytoplasmic portion of the chain corresponds to 236 to 245 (IVGALIQSVK). Residues 246 to 269 (KLSDVMILTVFCLSVFALIGLQLF) form a helical membrane-spanning segment. At 270–369 (MGNLRNKCVQ…YGYTSFDTFS (100 aa)) the chain is on the extracellular side. Intrachain disulfides connect Cys277-Cys345 and Cys336-Cys351. 4 N-linked (GlcNAc...) asparagine glycosylation sites follow: Asn295, Asn301, Asn306, and Asn338. Residues 370-384 (WAFLSLFRLMTQDFW) constitute an intramembrane region (pore-forming). At 385 to 397 (ENLYQLTLRAAGK) the chain is on the extracellular side. Residues 398–423 (TYMIFFVLVIFLGSFYLINLILAVVA) form a helical membrane-spanning segment. At 424 to 768 (MAYEEQNQAT…HIVNLVVMDP (345 aa)) the chain is on the cytoplasmic side. Positions 455 to 528 (QEAAQQAAAT…EFHKSESEDS (74 aa)) are disordered. The segment covering 456–466 (EAAQQAAATTA) has biased composition (low complexity). At Ser470 the chain carries Phosphoserine. Low complexity predominate over residues 479–492 (LSDSSSEASKLSSK). Positions 495–506 (KERRNRRKKRKQ) are enriched in basic residues. The span at 507–528 (KEQSGGEEKDDDEFHKSESEDS) shows a compositional bias: basic and acidic residues. Phosphoserine is present on residues Ser523, Ser525, Ser550, Ser551, Ser607, and Ser730. The segment at 584 to 627 (VGSENDFADDEHSTFEDNESRRDSLFVPRRHGERRNSNLSQTSR) is disordered. A compositionally biased stretch (basic and acidic residues) spans 593 to 607 (DEHSTFEDNESRRDS). The stretch at 750 to 1022 (CSPYWLKVKH…QIAVDRMHKG (273 aa)) is one II repeat. Residues 769-787 (FVDLAITICIVLNTLFMAM) form a helical membrane-spanning segment. Residues 788-797 (EHYPMTEHFN) are Extracellular-facing. The helical transmembrane segment at 798–820 (HVLTVGNLVFTGIFTAEMFLKII) threads the bilayer. Residues 821–830 (AMDPYYYFQE) are Cytoplasmic-facing. A helical membrane pass occupies residues 831–849 (GWNIFDGFIVTLSLVELGL). Over 850–854 (ANVEG) the chain is Extracellular. Residues 855 to 874 (LSVLRSFRLLRVFKLAKSWP) traverse the membrane as a helical segment. At 875–891 (TLNMLIKIIGNSVGALG) the chain is on the cytoplasmic side. Residues 892–912 (NLTLVLAIIVFIFAVVGMQLF) form a helical membrane-spanning segment. The Extracellular portion of the chain corresponds to 913–938 (GKSYKDCVCKIATDCKLPRWHMNDFF). Cysteines 921 and 927 form a disulfide. An intramembrane region (pore-forming) is located at residues 939 to 952 (HSFLIVFRVLCGEW). Over 953-965 (IETMWDCMEVAGQ) the chain is Extracellular. An intrachain disulfide couples Cys959 to Cys968. The chain crosses the membrane as a helical span at residues 966–992 (AMCLTVFMMVMVIGNLVVLNLFLALLL). The Cytoplasmic segment spans residues 993 to 1218 (SSFSADNLAA…RTCFRIVEHN (226 aa)). The interval 1129 to 1163 (TEDFSSESDLEESKEKLNESSSSSEGSTVDIGAPA) is disordered. The III repeat unit spans residues 1200–1514 (RGKQWWNLRR…KKYYNAMKKL (315 aa)). Residues 1219-1237 (WFETFIVFMILLSSGALAF) form a helical membrane-spanning segment. Residues 1238–1250 (EDIYIDQRKTIKT) are Extracellular-facing. The chain crosses the membrane as a helical span at residues 1251–1276 (MLEYADKVFTYIFILEMLLKWVAYGY). Topologically, residues 1277 to 1278 (QT) are cytoplasmic. Residues 1279 to 1304 (YFTNAWCWLDFLIVDVSLVSLTANAL) form a helical membrane-spanning segment. Topologically, residues 1305–1313 (GYSELGAIK) are extracellular. Residues 1314 to 1332 (SLRTLRALRPLRALSRFEG) form a helical membrane-spanning segment. Over 1333-1345 (MRVVVNALLGAIP) the chain is Cytoplasmic. Residues 1346-1369 (SIMNVLLVCLIFWLIFSIMGVNLF) traverse the membrane as a helical segment. Topologically, residues 1370-1415 (AGKFYHCVNTTTGDIFEISEVNNHSDCLKLIERNETARWKNVKVNF) are extracellular. A disulfide bridge connects residues Cys1376 and Cys1396. Positions 1416 to 1433 (DNVGFGYLSLLQVATFKG) form an intramembrane region, pore-forming. Residues 1434–1457 (WMDIMYAAVDSRNVELQPKYEESL) lie on the Extracellular side of the membrane. The helical transmembrane segment at 1458–1483 (YMYLYFVIFIIFGSFFTLNLFIGVII) threads the bilayer. Residues 1484–1541 (DNFNQQKKKFGGQDIFMTEEQKKYYNAMKKLGSKKPQKPIPRPGNKFQGMVFDFVTRQ) are Cytoplasmic-facing. The residue at position 1516 (Ser1516) is a Phosphoserine; by PKC. An IV repeat occupies 1523 to 1821 (IPRPGNKFQG…WEKFDPDATQ (299 aa)). A helical transmembrane segment spans residues 1542–1560 (VFDISIMILICLNMVTMMV). Residues 1561-1571 (ETDDQSDYVTS) are Extracellular-facing. The tract at residues 1561–1571 (ETDDQSDYVTS) is S1-S2 loop of repeat IV. Residues 1572 to 1593 (ILSRINLVFIVLFTGECVLKLI) traverse the membrane as a helical segment. The Cytoplasmic segment spans residues 1594 to 1601 (SLRHYYFT). Residues 1602 to 1623 (IGWNIFDFVVVILSIVGMFLAE) form a helical membrane-spanning segment. The tract at residues 1619–1636 (MFLAELIEKYFVSPTLFR) is S3b-S4 loop of repeat IV. Over 1624–1636 (LIEKYFVSPTLFR) the chain is Extracellular. Residues 1637–1655 (VIRLARIGRILRLIKGAKG) form a helical membrane-spanning segment. The Cytoplasmic portion of the chain corresponds to 1656 to 1665 (IRTLLFALMM). The chain crosses the membrane as a helical span at residues 1666 to 1688 (SLPALFNIGLLLFLVMFIYAIFG). Over 1689–1711 (MSNFAYVKREVGIDDMFNFETFG) the chain is Extracellular. The segment at residues 1712–1726 (NSMICLFQITTSAGW) is an intramembrane region (pore-forming). The Extracellular portion of the chain corresponds to 1727-1759 (DGLLAPILNSKPPDCDPNKVNPGSSVKGDCGNP). The cysteines at positions 1741 and 1756 are disulfide-linked. Residues 1760–1788 (SVGIFFFVSYIIISFLVVVNMYIAVILEN) form a helical membrane-spanning segment. Residues 1789-2009 (FSVATEESAE…EGKDEKAKGK (221 aa)) lie on the Cytoplasmic side of the membrane. The IQ domain maps to 1915 to 1944 (EEVSAVIIQRAYRRHLLKRTVKQASFTYNK). A disordered region spans residues 1984–2009 (PSYDRVTKPIVEKHEQEGKDEKAKGK). Positions 1988-2009 (RVTKPIVEKHEQEGKDEKAKGK) are enriched in basic and acidic residues.

It belongs to the sodium channel (TC 1.A.1.10) family. Nav1.1/SCN1A subfamily. The Nav1.1 voltage-gated sodium channel consists of an ion-conducting alpha subunit SCN1A which is functional on its own regulated by one or more beta-1 (SCN1B), beta-2 (SCN2B), beta-3 (SCN3B) and beta-4 (SCN4B) subunits. SCN1B and SCN3B are non-covalently associated with SCN1A. SCN2B and SCN4B are disulfide-linked to SCN1A. SCN1B regulates both the expression at the plasma membrane and the voltage dependence of Nav1.1 inactivation. SCN3B and SCN4B reduce Nav1.1 conductance. Probably interacts with TMEM233; modulates the gating properties of NaV1.1. Interacts with FGF13; regulates the steady-state inactivation of Nav.1.1. In terms of processing, phosphorylation at Ser-1516 by PKC in a highly conserved cytoplasmic loop slows inactivation of the sodium channel and reduces peak sodium currents. Present in cerebellar Purkinje neurons (at protein level). Expressed by myelinated, non-C-fiber neurons in sensory ganglia.

It localises to the cell membrane. The enzyme catalyses Na(+)(in) = Na(+)(out). Its activity is regulated as follows. Activated by the spider toxins Hm1a and Hm1b (H.maculata, AC P60992 and AC P0DOC5) eliciting acute pain and mechanical allodynia. Pore-forming subunit of Nav1.1, a voltage-gated sodium (Nav) channel that directly mediates the depolarizing phase of action potentials in excitable membranes. Navs, also called VGSCs (voltage-gated sodium channels) or VDSCs (voltage-dependent sodium channels), operate by switching between closed and open conformations depending on the voltage difference across the membrane. In the open conformation they allow Na(+) ions to selectively pass through the pore, along their electrochemical gradient. The influx of Na(+) ions provokes membrane depolarization, initiating the propagation of electrical signals throughout cells and tissues. By regulating the excitability of neurons, ensures that they respond appropriately to synaptic inputs, maintaining the balance between excitation and inhibition in brain neural circuits. Nav1.1 plays a role in controlling the excitability and action potential propagation from somatosensory neurons, thereby contributing to the sensory perception of mechanically-induced pain. The polypeptide is Sodium channel protein type 1 subunit alpha (Mus musculus (Mouse)).